The primary structure comprises 73 residues: Disintegrin lachesin (73 aa).

In terms of domain architecture, Disintegrin spans 1–73 (EAGEECDCGA…ADCPRNGYYG (73 aa)). 6 disulfides stabilise this stretch: C6–C21, C8–C16, C15–C38, C29–C35, C34–C59, and C47–C66. The short motif at 51-53 (RGD) is the Cell attachment site element. The segment at 51 to 73 (RGDNPDDRCTGQSADCPRNGYYG) is disordered.

Belongs to the venom metalloproteinase (M12B) family. P-II subfamily. P-IIa sub-subfamily. Monomer (disintegrin). Expressed by the venom gland.

It localises to the secreted. Functionally, inhibits fibrinogen interaction with platelets. Acts by binding to alpha-IIb/beta-3 (ITGA2B/ITGB3) on the platelet surface and inhibits aggregation induced by ADP, thrombin, platelet-activating factor and collagen. The sequence is that of Disintegrin lachesin from Lachesis muta muta (Bushmaster).